Consider the following 194-residue polypeptide: Segregation and condensation protein B (194 aa).

The protein belongs to the ScpB family. In terms of assembly, homodimer. Homodimerization may be required to stabilize the binding of ScpA to the Smc head domains. Component of a cohesin-like complex composed of ScpA, ScpB and the Smc homodimer, in which ScpA and ScpB bind to the head domain of Smc. The presence of the three proteins is required for the association of the complex with DNA.

It is found in the cytoplasm. Functionally, participates in chromosomal partition during cell division. May act via the formation of a condensin-like complex containing Smc and ScpA that pull DNA away from mid-cell into both cell halves. This chain is Segregation and condensation protein B, found in Brevibacillus brevis (strain 47 / JCM 6285 / NBRC 100599).